The primary structure comprises 56 residues: Large ribosomal subunit protein uL30 (56 aa).

This sequence belongs to the universal ribosomal protein uL30 family. In terms of assembly, part of the 50S ribosomal subunit.

The sequence is that of Large ribosomal subunit protein uL30 from Nitratidesulfovibrio vulgaris (strain DSM 19637 / Miyazaki F) (Desulfovibrio vulgaris).